A 321-amino-acid polypeptide reads, in one-letter code: MFRGIYKGSLPPIDPSSIHHGESLADQLQDKDYYSVGWNQYFDQSRDIKLPGTENTFRIYESNVDVVDNGYLFVFLHGGGYTSLSWSLVVDKIKKKNLEKKVRMMCYDCRGHGETKTSDDSNLSIETMVDDCANLINYYQDIIYKNEGGGGGNDDDDQKERLKVIIVGHSMGGSVVIKTSSTNRINNLFGLIVIDVVEGTALLALSSMKSILAKRPKSFDSVKDAIKWSISSNTVKNIESARVSLYFINNFFFFFLTDWFSGLSKEFLSSMALKLLILAGTDRLDRELTIAQMQGKFQLILLPLCGHVIQEDVPTGPKINI.

Residues Ser-170, Asp-195, and His-307 contribute to the active site.

The protein belongs to the AB hydrolase superfamily.

It carries out the reaction [phosphatase 2A protein]-C-terminal L-leucine methyl ester + H2O = [phosphatase 2A protein]-C-terminal L-leucine + methanol + H(+). Functionally, demethylates proteins that have been reversibly carboxymethylated. This Dictyostelium discoideum (Social amoeba) protein is Probable protein phosphatase methylesterase 1 (ppme1).